The following is a 1127-amino-acid chain: Cellulose synthase-like protein D1 (1127 aa).

A disordered region spans residues 1 to 24 (MASKGILKNGGKPPTAPSSAAPTV). 2 consecutive transmembrane segments (helical) span residues 262 to 282 (VISP…LFLM) and 292 to 312 (AIWL…SWVL). Residues Asp-392 and Asp-828 contribute to the active site. 6 consecutive transmembrane segments (helical) span residues 910–930 (VFLI…QFIV), 936–956 (TFLT…MLEI), 982–1002 (LAAV…SFTL), 1025–1045 (SLMI…AVGF), 1059–1079 (LLGG…FAKG), and 1089–1109 (TIVY…WIAI).

This sequence belongs to the glycosyltransferase 2 family. Plant cellulose synthase-like D subfamily.

It localises to the golgi apparatus membrane. Thought to be a Golgi-localized beta-glycan synthase that polymerize the backbones of noncellulosic polysaccharides (hemicelluloses) of plant cell wall. This Oryza sativa subsp. indica (Rice) protein is Cellulose synthase-like protein D1 (CSLD1).